Reading from the N-terminus, the 154-residue chain is Large ribosomal subunit protein uL13 (154 aa).

The protein belongs to the universal ribosomal protein uL13 family. As to quaternary structure, part of the 50S ribosomal subunit.

Functionally, this protein is one of the early assembly proteins of the 50S ribosomal subunit, although it is not seen to bind rRNA by itself. It is important during the early stages of 50S assembly. This chain is Large ribosomal subunit protein uL13, found in Rhodopseudomonas palustris (strain BisB5).